The chain runs to 650 residues: Acetyl-coenzyme A synthetase (650 aa).

Residues 191-194 (RGGR), threonine 311, and asparagine 335 contribute to the CoA site. ATP is bound by residues 387-389 (GEP), 411-416 (DTWWQT), aspartate 501, and arginine 516. A CoA-binding site is contributed by serine 524. Residue arginine 527 participates in ATP binding. Residues valine 538, histidine 540, and isoleucine 543 each contribute to the Mg(2+) site. Arginine 585 contributes to the CoA binding site. Residue lysine 610 is modified to N6-acetyllysine.

The protein belongs to the ATP-dependent AMP-binding enzyme family. Mg(2+) serves as cofactor. In terms of processing, acetylated. Deacetylation by the SIR2-homolog deacetylase activates the enzyme.

The catalysed reaction is acetate + ATP + CoA = acetyl-CoA + AMP + diphosphate. In terms of biological role, catalyzes the conversion of acetate into acetyl-CoA (AcCoA), an essential intermediate at the junction of anabolic and catabolic pathways. AcsA undergoes a two-step reaction. In the first half reaction, AcsA combines acetate with ATP to form acetyl-adenylate (AcAMP) intermediate. In the second half reaction, it can then transfer the acetyl group from AcAMP to the sulfhydryl group of CoA, forming the product AcCoA. The polypeptide is Acetyl-coenzyme A synthetase (Vibrio vulnificus (strain CMCP6)).